Reading from the N-terminus, the 421-residue chain is uncharacterized protein (421 aa).

Lysine 249 is modified (N6-(pyridoxal phosphate)lysine).

This sequence belongs to the class-I pyridoxal-phosphate-dependent aminotransferase family. Pyridoxal 5'-phosphate serves as cofactor.

The protein resides in the cytoplasm. This is an uncharacterized protein from Schizosaccharomyces pombe (strain 972 / ATCC 24843) (Fission yeast).